The chain runs to 76 residues: ATP synthase subunit 9, mitochondrial (76 aa).

Transmembrane regions (helical) follow at residues 14–34 (ISTI…AALI) and 48–68 (FPFA…CLMV).

This sequence belongs to the ATPase C chain family. F-type ATPases have 2 components, CF(1) - the catalytic core - and CF(0) - the membrane proton channel. CF(1) has five subunits: alpha(3), beta(3), gamma(1), delta(1), epsilon(1). CF(0) has three main subunits: a, b and c.

The protein resides in the mitochondrion membrane. In terms of biological role, mitochondrial membrane ATP synthase (F(1)F(0) ATP synthase or Complex V) produces ATP from ADP in the presence of a proton gradient across the membrane which is generated by electron transport complexes of the respiratory chain. F-type ATPases consist of two structural domains, F(1) - containing the extramembraneous catalytic core and F(0) - containing the membrane proton channel, linked together by a central stalk and a peripheral stalk. During catalysis, ATP synthesis in the catalytic domain of F(1) is coupled via a rotary mechanism of the central stalk subunits to proton translocation. Part of the complex F(0) domain. A homomeric c-ring of probably 10 subunits is part of the complex rotary element. This is ATP synthase subunit 9, mitochondrial (ATP9) from Cyberlindnera mrakii (Yeast).